The following is a 523-amino-acid chain: 2-isopropylmalate synthase (523 aa).

Residues 5-267 (VIIFDTTLRD…ETGINAKEIH (263 aa)) form the Pyruvate carboxyltransferase domain. The Mn(2+) site is built by Asp14, His202, His204, and Asn238. The interval 392–523 (GLQQLVVHSD…KQARTELGGV (132 aa)) is regulatory domain.

Belongs to the alpha-IPM synthase/homocitrate synthase family. LeuA type 1 subfamily. In terms of assembly, homodimer. Mn(2+) serves as cofactor.

The protein localises to the cytoplasm. It catalyses the reaction 3-methyl-2-oxobutanoate + acetyl-CoA + H2O = (2S)-2-isopropylmalate + CoA + H(+). It functions in the pathway amino-acid biosynthesis; L-leucine biosynthesis; L-leucine from 3-methyl-2-oxobutanoate: step 1/4. Functionally, catalyzes the condensation of the acetyl group of acetyl-CoA with 3-methyl-2-oxobutanoate (2-ketoisovalerate) to form 3-carboxy-3-hydroxy-4-methylpentanoate (2-isopropylmalate). The chain is 2-isopropylmalate synthase from Shewanella loihica (strain ATCC BAA-1088 / PV-4).